A 181-amino-acid chain; its full sequence is ECF RNA polymerase sigma factor RpoE (181 aa).

The tract at residues 29-96 (LFQHFAPKVK…RRIDGLRKDR (68 aa)) is sigma-70 factor domain-2. The Interaction with polymerase core subunit RpoC motif lies at 53–56 (ECAQ). Residues 129–178 (AIARLPEAQRALIERAFFGDLTHRELAAETGLPLGTIKSRIRLALDRLRQ) form a sigma-70 factor domain-4 region. A DNA-binding region (H-T-H motif) is located at residues 151-170 (HRELAAETGLPLGTIKSRIR).

It belongs to the sigma-70 factor family. ECF subfamily. In terms of assembly, interacts transiently with the RNA polymerase catalytic core formed by RpoA, RpoB, RpoC and RpoZ (2 alpha, 1 beta, 1 beta' and 1 omega subunit) to form the RNA polymerase holoenzyme that can initiate transcription. Forms a 1:1 complex (via sigma-70 factor domain 4) with anti-sigma factor ChrR; this inhibits the interaction of RpoE with the RNA polymerase catalytic core.

Functionally, sigma factors are initiation factors that promote the attachment of RNA polymerase to specific initiation sites and are then released. Extracytoplasmic function (ECF) sigma factors are held in an inactive form by a cognate anti-sigma factor until released. Sigma-E controls a transcriptional response to singlet oxygen, a by-product of photosynthesis; its continuous activity requires constant exposure to singlet oxygen. The regulon has about 180 genes that protect against or repair damage induced by singlet oxygen, including itself and rpoH2, a heat shock-responsive sigma factor. This Cereibacter sphaeroides (strain ATCC 17023 / DSM 158 / JCM 6121 / CCUG 31486 / LMG 2827 / NBRC 12203 / NCIMB 8253 / ATH 2.4.1.) (Rhodobacter sphaeroides) protein is ECF RNA polymerase sigma factor RpoE (rpoE).